A 378-amino-acid polypeptide reads, in one-letter code: 1-acyl-sn-glycerol-3-phosphate acyltransferase delta (378 aa).

The chain crosses the membrane as a helical span at residues 11–31 (FLCHLVFCYVFIASGLIINTI). Positions 96–101 (HKFEID) match the HXXXXD motif motif. Transmembrane regions (helical) follow at residues 125–145 (ELAY…VFCS), 307–327 (TLVN…QFLV), and 338–358 (LASF…MIGV).

This sequence belongs to the 1-acyl-sn-glycerol-3-phosphate acyltransferase family.

It localises to the endoplasmic reticulum membrane. It carries out the reaction a 1-acyl-sn-glycero-3-phosphate + an acyl-CoA = a 1,2-diacyl-sn-glycero-3-phosphate + CoA. The enzyme catalyses (4Z,7Z,10Z,13Z,16Z,19Z)-docosahexaenoyl-CoA + 1-hexadecanoyl-sn-glycero-3-phosphate = 1-hexadecanoyl-2-(4Z,7Z,10Z,13Z,16Z,19Z-docosahexaenoyl)-sn-glycero-3-phosphate + CoA. The catalysed reaction is 1-octadecanoyl-sn-glycero-3-phosphate + (9Z,12Z)-octadecadienoyl-CoA = 1-octadecanoyl-2-(9Z,12Z-octadecadienoyl)-sn-glycero-3-phosphate + CoA. It catalyses the reaction 1-octadecanoyl-sn-glycero-3-phosphate + (4Z,7Z,10Z,13Z,16Z,19Z)-docosahexaenoyl-CoA = 1-octadecanoyl-2-(4Z,7Z,10Z,13Z,16Z,19Z-docosahexaenoyl)-sn-glycero-3-phosphate + CoA. It carries out the reaction (4Z,7Z,10Z,13Z,16Z,19Z)-docosahexaenoyl-CoA + 1-(9Z-octadecenoyl)-sn-glycero-3-phosphate = 1-(9Z-octadecenoyl)-2-(4Z,7Z,10Z,13Z,16Z,19Z-docosahexaenoyl)-sn-glycero-3-phosphate + CoA. The protein operates within phospholipid metabolism; CDP-diacylglycerol biosynthesis; CDP-diacylglycerol from sn-glycerol 3-phosphate: step 2/3. In terms of biological role, converts 1-acyl-sn-glycerol-3-phosphate (lysophosphatidic acid or LPA) into 1,2-diacyl-sn-glycerol-3-phosphate (phosphatidic acid or PA) by incorporating an acyl moiety at the sn-2 position of the glycerol backbone. Exhibits high acyl-CoA specificity for polyunsaturated fatty acyl-CoA, especially docosahexaenoyl-CoA (22:6-CoA, DHA-CoA). The polypeptide is 1-acyl-sn-glycerol-3-phosphate acyltransferase delta (AGPAT4) (Pongo abelii (Sumatran orangutan)).